A 479-amino-acid chain; its full sequence is Putative F-box protein At1g67390 (479 aa).

The 49-residue stretch at 40 to 88 folds into the F-box domain; the sequence is DDRISKLPDDVLVMILASLSTEDALKTSVLSTRWKNVWKQVPYLHFDLL.

In Arabidopsis thaliana (Mouse-ear cress), this protein is Putative F-box protein At1g67390.